A 363-amino-acid chain; its full sequence is MHKNKILVPLSNNSYEVIIKQGLINNIGEELIRIGINSNRKILIVSNKEISTLFGRKLLNNLKKNNFNAEIFNIKAGESHKNFASLSEIFNAAFEVGLDRNSLLIALGGGIVGDVTGFAAATWLRGIEYIQIPTTLLSMVDSSVGGKTAVNHPKGKNLIGAFYQPKAVFIDPETLITLPTREFKAGMAEVIKYGVIKDKSLFEYLENEKNRDKILNLENESLIKIINKSIKTKACIVSEDEKENGIRAILNYGHSFGHVIENLCGYGEYLHGEAISIGMKIAGDIATEKNLWSKEHSLRQDHLIESYGLPIQTPKIKKNDVMKILMGDKKVRNGKMRFILPIELGEVDIFNDINESQFLKYFN.

NAD(+)-binding positions include 134–135 (TT), Lys147, Lys156, and 174–177 (TLIT). Zn(2+) contacts are provided by Glu189, His254, and His271.

The protein belongs to the sugar phosphate cyclases superfamily. Dehydroquinate synthase family. NAD(+) is required as a cofactor. It depends on Co(2+) as a cofactor. Requires Zn(2+) as cofactor.

It is found in the cytoplasm. The catalysed reaction is 7-phospho-2-dehydro-3-deoxy-D-arabino-heptonate = 3-dehydroquinate + phosphate. It participates in metabolic intermediate biosynthesis; chorismate biosynthesis; chorismate from D-erythrose 4-phosphate and phosphoenolpyruvate: step 2/7. Functionally, catalyzes the conversion of 3-deoxy-D-arabino-heptulosonate 7-phosphate (DAHP) to dehydroquinate (DHQ). The polypeptide is 3-dehydroquinate synthase (Prochlorococcus marinus subsp. pastoris (strain CCMP1986 / NIES-2087 / MED4)).